The following is a 361-amino-acid chain: Serpentine receptor class epsilon-32 (361 aa).

The next 7 membrane-spanning stretches (helical) occupy residues 34–54, 66–86, 124–144, 168–188, 195–215, 256–276, and 286–306; these read IIEL…LYVM, ILYI…LITI, LLIF…YGIL, IPIA…LSVL, FLSH…YLFI, LVFV…ALAF, and FVEN…MLTI.

This sequence belongs to the nematode receptor-like protein sre family.

It localises to the membrane. The polypeptide is Serpentine receptor class epsilon-32 (sre-32) (Caenorhabditis elegans).